The sequence spans 226 residues: Urease accessory protein UreF (226 aa).

The protein belongs to the UreF family. UreD, UreF and UreG form a complex that acts as a GTP-hydrolysis-dependent molecular chaperone, activating the urease apoprotein by helping to assemble the nickel containing metallocenter of UreC. The UreE protein probably delivers the nickel.

The protein localises to the cytoplasm. Its function is as follows. Required for maturation of urease via the functional incorporation of the urease nickel metallocenter. In Burkholderia ambifaria (strain MC40-6), this protein is Urease accessory protein UreF.